We begin with the raw amino-acid sequence, 130 residues long: Small ribosomal subunit protein uS9 (130 aa).

It belongs to the universal ribosomal protein uS9 family.

The sequence is that of Small ribosomal subunit protein uS9 from Shewanella loihica (strain ATCC BAA-1088 / PV-4).